We begin with the raw amino-acid sequence, 316 residues long: Ribosomal RNA large subunit methyltransferase F (316 aa).

It belongs to the methyltransferase superfamily. METTL16/RlmF family.

Its subcellular location is the cytoplasm. The catalysed reaction is adenosine(1618) in 23S rRNA + S-adenosyl-L-methionine = N(6)-methyladenosine(1618) in 23S rRNA + S-adenosyl-L-homocysteine + H(+). Functionally, specifically methylates the adenine in position 1618 of 23S rRNA. This is Ribosomal RNA large subunit methyltransferase F from Pseudomonas putida (strain GB-1).